A 309-amino-acid polypeptide reads, in one-letter code: ADP-L-glycero-D-manno-heptose-6-epimerase (309 aa).

NADP(+) is bound by residues 10-11 (MI), 31-32 (DN), K38, K53, 75-79 (EGACS), and N92. Y139 serves as the catalytic Proton acceptor. Residue K143 coordinates NADP(+). N168 contacts substrate. NADP(+) is bound by residues V169 and K177. The active-site Proton acceptor is K177. Substrate contacts are provided by residues S179, H186, 200–203 (FDGS), R208, and Y271.

Belongs to the NAD(P)-dependent epimerase/dehydratase family. HldD subfamily. As to quaternary structure, homopentamer. NADP(+) serves as cofactor.

The catalysed reaction is ADP-D-glycero-beta-D-manno-heptose = ADP-L-glycero-beta-D-manno-heptose. The protein operates within nucleotide-sugar biosynthesis; ADP-L-glycero-beta-D-manno-heptose biosynthesis; ADP-L-glycero-beta-D-manno-heptose from D-glycero-beta-D-manno-heptose 7-phosphate: step 4/4. Functionally, catalyzes the interconversion between ADP-D-glycero-beta-D-manno-heptose and ADP-L-glycero-beta-D-manno-heptose via an epimerization at carbon 6 of the heptose. This is ADP-L-glycero-D-manno-heptose-6-epimerase from Serratia proteamaculans (strain 568).